The chain runs to 128 residues: Aspartate 1-decarboxylase (128 aa).

Ser25 acts as the Schiff-base intermediate with substrate; via pyruvic acid in catalysis. Position 25 is a pyruvic acid (Ser) (Ser25). Thr57 contributes to the substrate binding site. Residue Tyr58 is the Proton donor of the active site. Substrate is bound at residue 73-75 (GSA).

Belongs to the PanD family. Heterooctamer of four alpha and four beta subunits. Requires pyruvate as cofactor. Post-translationally, is synthesized initially as an inactive proenzyme, which is activated by self-cleavage at a specific serine bond to produce a beta-subunit with a hydroxyl group at its C-terminus and an alpha-subunit with a pyruvoyl group at its N-terminus.

Its subcellular location is the cytoplasm. It carries out the reaction L-aspartate + H(+) = beta-alanine + CO2. It participates in cofactor biosynthesis; (R)-pantothenate biosynthesis; beta-alanine from L-aspartate: step 1/1. In terms of biological role, catalyzes the pyruvoyl-dependent decarboxylation of aspartate to produce beta-alanine. The protein is Aspartate 1-decarboxylase of Burkholderia cenocepacia (strain HI2424).